The following is a 251-amino-acid chain: Cell division protein ZapD (251 aa).

It belongs to the ZapD family. As to quaternary structure, interacts with FtsZ.

It is found in the cytoplasm. Its function is as follows. Cell division factor that enhances FtsZ-ring assembly. Directly interacts with FtsZ and promotes bundling of FtsZ protofilaments, with a reduction in FtsZ GTPase activity. The sequence is that of Cell division protein ZapD from Burkholderia cenocepacia (strain HI2424).